The sequence spans 399 residues: Inositol polyphosphate 1-phosphatase (399 aa).

Asp-54 is a binding site for Li(+). Glu-79 is a binding site for Mg(2+). Residue Glu-80 coordinates Li(+). The Mg(2+) site is built by Asp-153 and Ile-155. Positions 156, 157, 158, 267, 269, 289, 290, 293, and 311 each coordinate 1D-myo-inositol 1,4-bisphosphate. Asp-316 lines the Mg(2+) pocket. Residue Ser-317 is modified to Phosphoserine.

This sequence belongs to the inositol monophosphatase superfamily. As to quaternary structure, monomer. Mg(2+) serves as cofactor. As to expression, ubiquitously expressed, with highest levels in pancreas and kidney.

The catalysed reaction is 1D-myo-inositol 1,4-bisphosphate + H2O = 1D-myo-inositol 4-phosphate + phosphate. It carries out the reaction 1D-myo-inositol 1,3,4-trisphosphate + H2O = 1D-myo-inositol 3,4-bisphosphate + phosphate. Its pathway is signal transduction; phosphatidylinositol signaling pathway. Inhibited by Li(+). Its function is as follows. Mg(2+)-dependent phosphatase that catalyzes the hydrolysis of the 1-position phosphate from inositol 1,4-bisphosphate and inositol 1,3,4-trisphosphate and participates in inositol phosphate metabolism. The protein is Inositol polyphosphate 1-phosphatase of Homo sapiens (Human).